We begin with the raw amino-acid sequence, 130 residues long: Sec-independent protein translocase protein TatB (130 aa).

Residues 1-21 form a helical membrane-spanning segment; sequence MFDIGFWELVLIFVVGLVVLG. Residues 85-130 form a disordered region; it reads LKQAAQSVNRPYADVSAKNEATSSSSSDATHQTEATKTSAANTKSE. Residues 112 to 130 are compositionally biased toward polar residues; that stretch reads DATHQTEATKTSAANTKSE.

This sequence belongs to the TatB family. In terms of assembly, the Tat system comprises two distinct complexes: a TatABC complex, containing multiple copies of TatA, TatB and TatC subunits, and a separate TatA complex, containing only TatA subunits. Substrates initially bind to the TatABC complex, which probably triggers association of the separate TatA complex to form the active translocon.

It localises to the cell inner membrane. Functionally, part of the twin-arginine translocation (Tat) system that transports large folded proteins containing a characteristic twin-arginine motif in their signal peptide across membranes. Together with TatC, TatB is part of a receptor directly interacting with Tat signal peptides. TatB may form an oligomeric binding site that transiently accommodates folded Tat precursor proteins before their translocation. In Vibrio vulnificus (strain CMCP6), this protein is Sec-independent protein translocase protein TatB.